Consider the following 77-residue polypeptide: Small ribosomal subunit protein bS20 (77 aa).

The protein belongs to the bacterial ribosomal protein bS20 family.

Its function is as follows. Binds directly to 16S ribosomal RNA. The sequence is that of Small ribosomal subunit protein bS20 from Lactococcus lactis subsp. cremoris (strain MG1363).